Consider the following 316-residue polypeptide: 4-hydroxy-3-methylbut-2-enyl diphosphate reductase (316 aa).

Residue Cys12 participates in [4Fe-4S] cluster binding. The (2E)-4-hydroxy-3-methylbut-2-enyl diphosphate site is built by His41 and His74. Dimethylallyl diphosphate is bound by residues His41 and His74. His41 and His74 together coordinate isopentenyl diphosphate. [4Fe-4S] cluster is bound at residue Cys96. Residue His124 participates in (2E)-4-hydroxy-3-methylbut-2-enyl diphosphate binding. His124 lines the dimethylallyl diphosphate pocket. Residue His124 coordinates isopentenyl diphosphate. Residue Glu126 is the Proton donor of the active site. Thr169 contacts (2E)-4-hydroxy-3-methylbut-2-enyl diphosphate. Cys199 lines the [4Fe-4S] cluster pocket. Residues Ser227, Ser228, Asn229, and Ser271 each contribute to the (2E)-4-hydroxy-3-methylbut-2-enyl diphosphate site. Residues Ser227, Ser228, Asn229, and Ser271 each contribute to the dimethylallyl diphosphate site. Positions 227, 228, 229, and 271 each coordinate isopentenyl diphosphate.

It belongs to the IspH family. The cofactor is [4Fe-4S] cluster.

It catalyses the reaction isopentenyl diphosphate + 2 oxidized [2Fe-2S]-[ferredoxin] + H2O = (2E)-4-hydroxy-3-methylbut-2-enyl diphosphate + 2 reduced [2Fe-2S]-[ferredoxin] + 2 H(+). The enzyme catalyses dimethylallyl diphosphate + 2 oxidized [2Fe-2S]-[ferredoxin] + H2O = (2E)-4-hydroxy-3-methylbut-2-enyl diphosphate + 2 reduced [2Fe-2S]-[ferredoxin] + 2 H(+). Its pathway is isoprenoid biosynthesis; dimethylallyl diphosphate biosynthesis; dimethylallyl diphosphate from (2E)-4-hydroxy-3-methylbutenyl diphosphate: step 1/1. It participates in isoprenoid biosynthesis; isopentenyl diphosphate biosynthesis via DXP pathway; isopentenyl diphosphate from 1-deoxy-D-xylulose 5-phosphate: step 6/6. Its function is as follows. Catalyzes the conversion of 1-hydroxy-2-methyl-2-(E)-butenyl 4-diphosphate (HMBPP) into a mixture of isopentenyl diphosphate (IPP) and dimethylallyl diphosphate (DMAPP). Acts in the terminal step of the DOXP/MEP pathway for isoprenoid precursor biosynthesis. This Xanthomonas campestris pv. campestris (strain 8004) protein is 4-hydroxy-3-methylbut-2-enyl diphosphate reductase.